The sequence spans 88 residues: Apolipoprotein C-I (88 aa).

Residues 1–26 form the signal peptide; the sequence is MRLFLSLPVLVVVLAMVLEGPAPTQA.

This sequence belongs to the apolipoprotein C1 family.

The protein resides in the secreted. Its function is as follows. Inhibitor of lipoprotein binding to the low density lipoprotein (LDL) receptor, LDL receptor-related protein, and very low density lipoprotein (VLDL) receptor. Associates with high density lipoproteins (HDL) and the triacylglycerol-rich lipoproteins in the plasma and makes up about 10% of the protein of the VLDL and 2% of that of HDL. Appears to interfere directly with fatty acid uptake and is also the major plasma inhibitor of cholesteryl ester transfer protein (CETP). Binds free fatty acids and reduces their intracellular esterification. Modulates the interaction of APOE with beta-migrating VLDL and inhibits binding of beta-VLDL to the LDL receptor-related protein. This Mirounga angustirostris (Northern elephant seal) protein is Apolipoprotein C-I (APOC1).